The sequence spans 360 residues: Peptide chain release factor 1 (360 aa).

Residue Gln235 is modified to N5-methylglutamine. Residues 283–308 (MQKRQQAEASERRNLLGSGDRSDRNR) are compositionally biased toward basic and acidic residues. The segment at 283-313 (MQKRQQAEASERRNLLGSGDRSDRNRTYNFP) is disordered.

It belongs to the prokaryotic/mitochondrial release factor family. Methylated by PrmC. Methylation increases the termination efficiency of RF1.

Its subcellular location is the cytoplasm. Functionally, peptide chain release factor 1 directs the termination of translation in response to the peptide chain termination codons UAG and UAA. This Yersinia enterocolitica serotype O:8 / biotype 1B (strain NCTC 13174 / 8081) protein is Peptide chain release factor 1.